The primary structure comprises 502 residues: Probable cytosol aminopeptidase (502 aa).

Mn(2+)-binding residues include Lys269 and Asp274. The active site involves Lys281. Mn(2+) contacts are provided by Asp292, Asp351, and Glu353. Residue Arg355 is part of the active site.

The protein belongs to the peptidase M17 family. It depends on Mn(2+) as a cofactor.

It is found in the cytoplasm. It catalyses the reaction Release of an N-terminal amino acid, Xaa-|-Yaa-, in which Xaa is preferably Leu, but may be other amino acids including Pro although not Arg or Lys, and Yaa may be Pro. Amino acid amides and methyl esters are also readily hydrolyzed, but rates on arylamides are exceedingly low.. The catalysed reaction is Release of an N-terminal amino acid, preferentially leucine, but not glutamic or aspartic acids.. In terms of biological role, presumably involved in the processing and regular turnover of intracellular proteins. Catalyzes the removal of unsubstituted N-terminal amino acids from various peptides. The sequence is that of Probable cytosol aminopeptidase from Vibrio vulnificus (strain CMCP6).